The following is a 206-amino-acid chain: Large ribosomal subunit protein uL4 (206 aa).

The disordered stretch occupies residues 47-77 (GTQSTKTRSEVRGGGIKPWRQKGTGRARQGS).

The protein belongs to the universal ribosomal protein uL4 family. As to quaternary structure, part of the 50S ribosomal subunit.

Functionally, one of the primary rRNA binding proteins, this protein initially binds near the 5'-end of the 23S rRNA. It is important during the early stages of 50S assembly. It makes multiple contacts with different domains of the 23S rRNA in the assembled 50S subunit and ribosome. Forms part of the polypeptide exit tunnel. This is Large ribosomal subunit protein uL4 from Clostridium beijerinckii (strain ATCC 51743 / NCIMB 8052) (Clostridium acetobutylicum).